The primary structure comprises 619 residues: 1-deoxy-D-xylulose-5-phosphate synthase (619 aa).

Thiamine diphosphate is bound by residues histidine 74 and 115 to 117; that span reads GHS. Aspartate 146 contacts Mg(2+). Residues 147-148, asparagine 175, and tyrosine 285 each bind thiamine diphosphate; that span reads GA. Residue asparagine 175 participates in Mg(2+) binding. Residues 289-310 form a disordered region; sequence EKSPSKYHGIPPSNDKKEEPNK. A thiamine diphosphate-binding site is contributed by glutamate 365.

Belongs to the transketolase family. DXPS subfamily. In terms of assembly, homodimer. Mg(2+) is required as a cofactor. The cofactor is thiamine diphosphate.

The catalysed reaction is D-glyceraldehyde 3-phosphate + pyruvate + H(+) = 1-deoxy-D-xylulose 5-phosphate + CO2. Its pathway is metabolic intermediate biosynthesis; 1-deoxy-D-xylulose 5-phosphate biosynthesis; 1-deoxy-D-xylulose 5-phosphate from D-glyceraldehyde 3-phosphate and pyruvate: step 1/1. Functionally, catalyzes the acyloin condensation reaction between C atoms 2 and 3 of pyruvate and glyceraldehyde 3-phosphate to yield 1-deoxy-D-xylulose-5-phosphate (DXP). This Clostridium botulinum (strain Alaska E43 / Type E3) protein is 1-deoxy-D-xylulose-5-phosphate synthase.